A 159-amino-acid polypeptide reads, in one-letter code: Nanos homolog 3 (159 aa).

Positions Q42–A87 are disordered. The segment at F91–M145 adopts a Nanos-type zinc-finger fold. Positions 92, 95, 108, 119, 127, 130, 138, and 143 each coordinate Zn(2+). Short sequence motifs (C2HC) lie at residues C92–C119 and C127–C143. Residues C92–W159 are interaction with mylpfa.

This sequence belongs to the nanos family. In terms of assembly, interacts (via C-terminus) with myosin mylpfa/mylz2; the interaction negatively regulates mylpfa phosphorylation. In terms of tissue distribution, in the embryo, displays early ubiquitous expression before being restricted to primordial germ cells in a 3'-UTR-dependent manner. Expressed in early stage germ cells in larval and adult ovaries.

The protein localises to the cytoplasm. It localises to the perinuclear region. Its function is as follows. RNA-binding protein which binds to RNA with no sequence specificity. Probably represses translation of specific mRNAs. Essential for the development of primordial germ cells (PGCs) by ensuring their proper migration and survival but is not required for PGC specification. Also required to maintain oocyte production in the adult ovary. Negatively regulates phosphorylation of myosin mylpfa/mylz2. The protein is Nanos homolog 3 of Danio rerio (Zebrafish).